We begin with the raw amino-acid sequence, 165 residues long: 6,7-dimethyl-8-ribityllumazine synthase (165 aa).

5-amino-6-(D-ribitylamino)uracil is bound by residues Phe-22, 56–58, and 80–82; these read SME and AVI. 85–86 contacts (2S)-2-hydroxy-3-oxobutyl phosphate; sequence ET. The Proton donor role is filled by His-88. A 5-amino-6-(D-ribitylamino)uracil-binding site is contributed by Phe-113. Arg-127 lines the (2S)-2-hydroxy-3-oxobutyl phosphate pocket.

The protein belongs to the DMRL synthase family.

It carries out the reaction (2S)-2-hydroxy-3-oxobutyl phosphate + 5-amino-6-(D-ribitylamino)uracil = 6,7-dimethyl-8-(1-D-ribityl)lumazine + phosphate + 2 H2O + H(+). It functions in the pathway cofactor biosynthesis; riboflavin biosynthesis; riboflavin from 2-hydroxy-3-oxobutyl phosphate and 5-amino-6-(D-ribitylamino)uracil: step 1/2. Catalyzes the formation of 6,7-dimethyl-8-ribityllumazine by condensation of 5-amino-6-(D-ribitylamino)uracil with 3,4-dihydroxy-2-butanone 4-phosphate. This is the penultimate step in the biosynthesis of riboflavin. The sequence is that of 6,7-dimethyl-8-ribityllumazine synthase from Thermotoga petrophila (strain ATCC BAA-488 / DSM 13995 / JCM 10881 / RKU-1).